A 318-amino-acid polypeptide reads, in one-letter code: Transaldolase (318 aa).

Catalysis depends on Lys132, which acts as the Schiff-base intermediate with substrate.

The protein belongs to the transaldolase family. Type 1 subfamily. Homodimer.

Its subcellular location is the cytoplasm. The enzyme catalyses D-sedoheptulose 7-phosphate + D-glyceraldehyde 3-phosphate = D-erythrose 4-phosphate + beta-D-fructose 6-phosphate. The protein operates within carbohydrate degradation; pentose phosphate pathway; D-glyceraldehyde 3-phosphate and beta-D-fructose 6-phosphate from D-ribose 5-phosphate and D-xylulose 5-phosphate (non-oxidative stage): step 2/3. Its function is as follows. Transaldolase is important for the balance of metabolites in the pentose-phosphate pathway. In Hamiltonella defensa subsp. Acyrthosiphon pisum (strain 5AT), this protein is Transaldolase.